The primary structure comprises 119 residues: Large ribosomal subunit protein uL18 (119 aa).

The protein belongs to the universal ribosomal protein uL18 family. Part of the 50S ribosomal subunit; part of the 5S rRNA/L5/L18/L25 subcomplex. Contacts the 5S and 23S rRNAs.

In terms of biological role, this is one of the proteins that bind and probably mediate the attachment of the 5S RNA into the large ribosomal subunit, where it forms part of the central protuberance. The sequence is that of Large ribosomal subunit protein uL18 from Anaeromyxobacter dehalogenans (strain 2CP-C).